The sequence spans 268 residues: Tropinone reductase homolog (268 aa).

21–45 (LVTGGTRGIGYAIVEELANFGAEVY) provides a ligand contact to NADP(+). A substrate-binding site is contributed by Ser154. Tyr167 serves as the catalytic Proton acceptor.

It belongs to the short-chain dehydrogenases/reductases (SDR) family.

This chain is Tropinone reductase homolog, found in Datura stramonium (Jimsonweed).